The chain runs to 267 residues: MIKLSIIYNEDKEDAIKIYKELLKYLKSKKEFEVLDDKNISQAEYIVVIGGDGTLLRGFKKIKDKKVKIIAINSGTLGYLTEIRKDGYKKIFENILKGKINIEERYFFTVKIGKKKYNALNEVFLTKDNIKRNIVSSEIYVDDKFLGKFKGDGVIIATPTGSTAYSLSAGGPIVTPELKLFLITPIAPHNLNTRPIILSGDVKIVLTLVGPSEFGIVNVDGHTHNKINIEDKVEISYSKESLKIVLPDDRNYYNVLREKLKWGENLC.

The active-site Proton acceptor is aspartate 52. Residues 52–53 (DG), arginine 57, 121–122 (NE), arginine 132, lysine 150, aspartate 152, 163–168 (TAYSLS), and alanine 187 each bind NAD(+).

Belongs to the NAD kinase family. The cofactor is a divalent metal cation.

Its subcellular location is the cytoplasm. It catalyses the reaction NAD(+) + ATP = ADP + NADP(+) + H(+). Its function is as follows. Involved in the regulation of the intracellular balance of NAD and NADP, and is a key enzyme in the biosynthesis of NADP. Catalyzes specifically the phosphorylation on 2'-hydroxyl of the adenosine moiety of NAD to yield NADP. The sequence is that of NAD kinase from Fusobacterium nucleatum subsp. nucleatum (strain ATCC 25586 / DSM 15643 / BCRC 10681 / CIP 101130 / JCM 8532 / KCTC 2640 / LMG 13131 / VPI 4355).